Consider the following 151-residue polypeptide: Deoxyuridine 5'-triphosphate nucleotidohydrolase (151 aa).

Substrate is bound by residues 70–72, Asn-83, 87–89, and Met-97; these read RSG and LID.

It belongs to the dUTPase family. Mg(2+) is required as a cofactor.

It catalyses the reaction dUTP + H2O = dUMP + diphosphate + H(+). It participates in pyrimidine metabolism; dUMP biosynthesis; dUMP from dCTP (dUTP route): step 2/2. This enzyme is involved in nucleotide metabolism: it produces dUMP, the immediate precursor of thymidine nucleotides and it decreases the intracellular concentration of dUTP so that uracil cannot be incorporated into DNA. The chain is Deoxyuridine 5'-triphosphate nucleotidohydrolase from Pseudomonas entomophila (strain L48).